A 94-amino-acid polypeptide reads, in one-letter code: Small ribosomal subunit protein uS19 (94 aa).

This sequence belongs to the universal ribosomal protein uS19 family.

In terms of biological role, protein S19 forms a complex with S13 that binds strongly to the 16S ribosomal RNA. This is Small ribosomal subunit protein uS19 from Halothermothrix orenii (strain H 168 / OCM 544 / DSM 9562).